The following is a 674-amino-acid chain: UvrABC system protein C (674 aa).

The region spanning 64-142 is the GIY-YIG domain; it reads NGPGVYRMLN…IKRLRPRFNV (79 aa). In terms of domain architecture, UVR spans 252–287; the sequence is QAVKATIASAMAEASENLDFERAALYRDRLAALSHV.

It belongs to the UvrC family. Interacts with UvrB in an incision complex.

Its subcellular location is the cytoplasm. In terms of biological role, the UvrABC repair system catalyzes the recognition and processing of DNA lesions. UvrC both incises the 5' and 3' sides of the lesion. The N-terminal half is responsible for the 3' incision and the C-terminal half is responsible for the 5' incision. The protein is UvrABC system protein C of Rhizobium meliloti (strain 1021) (Ensifer meliloti).